Consider the following 209-residue polypeptide: dTTP/UTP pyrophosphatase (209 aa).

Catalysis depends on aspartate 88, which acts as the Proton acceptor.

The protein belongs to the Maf family. YhdE subfamily. A divalent metal cation serves as cofactor.

The protein localises to the cytoplasm. It carries out the reaction dTTP + H2O = dTMP + diphosphate + H(+). The catalysed reaction is UTP + H2O = UMP + diphosphate + H(+). In terms of biological role, nucleoside triphosphate pyrophosphatase that hydrolyzes dTTP and UTP. May have a dual role in cell division arrest and in preventing the incorporation of modified nucleotides into cellular nucleic acids. The protein is dTTP/UTP pyrophosphatase of Burkholderia mallei (strain ATCC 23344).